The sequence spans 193 residues: Crossover junction endodeoxyribonuclease RuvC (193 aa).

Residues Asp7, Glu68, and Asp141 contribute to the active site. Positions 7, 68, and 141 each coordinate Mg(2+).

The protein belongs to the RuvC family. In terms of assembly, homodimer which binds Holliday junction (HJ) DNA. The HJ becomes 2-fold symmetrical on binding to RuvC with unstacked arms; it has a different conformation from HJ DNA in complex with RuvA. In the full resolvosome a probable DNA-RuvA(4)-RuvB(12)-RuvC(2) complex forms which resolves the HJ. The cofactor is Mg(2+).

It is found in the cytoplasm. It catalyses the reaction Endonucleolytic cleavage at a junction such as a reciprocal single-stranded crossover between two homologous DNA duplexes (Holliday junction).. Functionally, the RuvA-RuvB-RuvC complex processes Holliday junction (HJ) DNA during genetic recombination and DNA repair. Endonuclease that resolves HJ intermediates. Cleaves cruciform DNA by making single-stranded nicks across the HJ at symmetrical positions within the homologous arms, yielding a 5'-phosphate and a 3'-hydroxyl group; requires a central core of homology in the junction. The consensus cleavage sequence is 5'-(A/T)TT(C/G)-3'. Cleavage occurs on the 3'-side of the TT dinucleotide at the point of strand exchange. HJ branch migration catalyzed by RuvA-RuvB allows RuvC to scan DNA until it finds its consensus sequence, where it cleaves and resolves the cruciform DNA. This is Crossover junction endodeoxyribonuclease RuvC from Renibacterium salmoninarum (strain ATCC 33209 / DSM 20767 / JCM 11484 / NBRC 15589 / NCIMB 2235).